An 89-amino-acid polypeptide reads, in one-letter code: Small ribosomal subunit protein uS14 (89 aa).

The protein belongs to the universal ribosomal protein uS14 family. As to quaternary structure, part of the 30S ribosomal subunit. Contacts proteins S3 and S10.

In terms of biological role, binds 16S rRNA, required for the assembly of 30S particles and may also be responsible for determining the conformation of the 16S rRNA at the A site. The protein is Small ribosomal subunit protein uS14 of Exiguobacterium sibiricum (strain DSM 17290 / CCUG 55495 / CIP 109462 / JCM 13490 / 255-15).